Consider the following 275-residue polypeptide: Beta-lactamase OXA-2 (275 aa).

The signal sequence occupies residues 1–21 (MAIRIFAILFSIFSLATFAHA). Catalysis depends on serine 72, which acts as the Acyl-ester intermediate. Lysine 75 is modified (N6-carboxylysine). 210–212 (KTG) serves as a coordination point for substrate.

It belongs to the class-D beta-lactamase family.

It catalyses the reaction a beta-lactam + H2O = a substituted beta-amino acid. Its function is as follows. This is an oxacillin-hydrolyzing beta-lactamase. This Escherichia coli protein is Beta-lactamase OXA-2 (bla).